Consider the following 124-residue polypeptide: Phosphoribosyl-ATP pyrophosphatase (124 aa).

Belongs to the PRA-PH family.

Its subcellular location is the cytoplasm. It catalyses the reaction 1-(5-phospho-beta-D-ribosyl)-ATP + H2O = 1-(5-phospho-beta-D-ribosyl)-5'-AMP + diphosphate + H(+). It participates in amino-acid biosynthesis; L-histidine biosynthesis; L-histidine from 5-phospho-alpha-D-ribose 1-diphosphate: step 2/9. The polypeptide is Phosphoribosyl-ATP pyrophosphatase (Ralstonia pickettii (strain 12J)).